We begin with the raw amino-acid sequence, 907 residues long: Protein translocase subunit SecA (907 aa).

Residues Gln87, 105–109 (GEGKT), and Asp510 each bind ATP. The Zn(2+) site is built by Cys892, Cys894, Cys903, and His904.

Belongs to the SecA family. Monomer and homodimer. Part of the essential Sec protein translocation apparatus which comprises SecA, SecYEG and auxiliary proteins SecDF-YajC and YidC. Zn(2+) serves as cofactor.

It is found in the cell inner membrane. Its subcellular location is the cytoplasm. The enzyme catalyses ATP + H2O + cellular proteinSide 1 = ADP + phosphate + cellular proteinSide 2.. Its function is as follows. Part of the Sec protein translocase complex. Interacts with the SecYEG preprotein conducting channel. Has a central role in coupling the hydrolysis of ATP to the transfer of proteins into and across the cell membrane, serving both as a receptor for the preprotein-SecB complex and as an ATP-driven molecular motor driving the stepwise translocation of polypeptide chains across the membrane. The sequence is that of Protein translocase subunit SecA from Acinetobacter baumannii (strain ATCC 17978 / DSM 105126 / CIP 53.77 / LMG 1025 / NCDC KC755 / 5377).